Reading from the N-terminus, the 1115-residue chain is Tbc2 translation factor, chloroplastic (1115 aa).

2 stretches are compositionally biased toward low complexity: residues 69 to 87 (TASV…QLSS) and 163 to 175 (RRAG…SGRA). Disordered regions lie at residues 69–90 (TASV…SKAL) and 163–210 (RRAG…SSSS). Positions 176–186 (RGWGSGPGRNG) are enriched in gly residues. A compositionally biased stretch (low complexity) spans 187–210 (SGSSSVSVNGSGSSSNGSSSSSSS). 9 tandem repeats follow at residues 483 to 521 (LVLE…WVEA), 607 to 645 (LDLT…WMQA), 685 to 723 (LAAT…WVGA), 724 to 763 (LLEE…AARL), 764 to 803 (MWRS…TQLC), 804 to 842 (LQAA…WLTR), 843 to 880 (MLLS…WLRR), 990 to 1029 (PAAH…QAAW), and 1030 to 1068 (WAAS…WLQA). The segment at 483–1068 (LVLELSRARL…LRPPPEWLQA (586 aa)) is 9 X 38 AA approximate repeats.

In terms of assembly, part of a 400 kDa complex which is not stably associated with RNA.

It localises to the plastid. The protein localises to the chloroplast stroma. Functionally, required for expression of the chloroplast encoded psbC mRNA, most likely for translation initiation. Interacts with the 5'-UTR of psbC. This chain is Tbc2 translation factor, chloroplastic (TBC2), found in Chlamydomonas reinhardtii (Chlamydomonas smithii).